The chain runs to 299 residues: Ubiquinol-cytochrome c reductase complex assembly factor 1 (299 aa).

The protein belongs to the CBP3 family. In terms of assembly, interacts with UQCC2. Interacts with UQCC3. Forms a complex, named COMB/coordinator of mitochondrial CYTB biogenesis, composed of UQCC1, UQCC2, UQCC4, UQCC5 and UQCC6; stabilizes nascent cytochrome b/MT-CYB and promotes its membrane insertion. Forms a complex, named COMB/coordinator of mitochondrial CYTB biogenesis, composed of UQCC1, UQCC2, UQCC4, UQCC5 and UQCC6; stabilizes nascent cytochrome b/MT-CYB and promotes its membrane insertion. Forms a complex, named COMA, composed of UQCC1, UQCC2 and UQCC4; activates MT-CYB translation. Forms a complex, named COMC, composed of UQCC1, UQCC2; UQCC3 and UQCC4; mediates MT-CYB hemylation and association with the first nuclear-encoded CIII subunit UQCRQ.

It localises to the mitochondrion inner membrane. It is found in the cytoplasmic vesicle. Required for the assembly of the ubiquinol-cytochrome c reductase complex (mitochondrial respiratory chain complex III or cytochrome b-c1 complex). Involved in cytochrome b translation and/or stability. The sequence is that of Ubiquinol-cytochrome c reductase complex assembly factor 1 (UQCC1) from Homo sapiens (Human).